We begin with the raw amino-acid sequence, 69 residues long: Mu-conotoxin-like Am3.1 (69 aa).

The N-terminal stretch at 1 to 20 (MMSKLRVLLIICLLLFPLTA) is a signal peptide. Residues 21–52 (VPLDGDQPADRPAERTQDDISSEHHPMFDAVR) constitute a propeptide that is removed on maturation. The disordered stretch occupies residues 22 to 43 (PLDGDQPADRPAERTQDDISSE). Residues 28-43 (PADRPAERTQDDISSE) show a composition bias toward basic and acidic residues. 4-hydroxyproline; partial; in minor form is present on Pro-66. Cys-68 is subject to Cysteine amide.

It belongs to the conotoxin M family. Post-translationally, mostly non-hydroxylated. Contains 3 disulfide bonds. Expressed by the venom duct.

It is found in the secreted. Its function is as follows. Mu-conotoxins block voltage-gated sodium channels (Nav). The polypeptide is Mu-conotoxin-like Am3.1 (Conus amadis (Amadis cone)).